A 270-amino-acid chain; its full sequence is tRNA pseudouridine synthase A (270 aa).

The active-site Nucleophile is the Asp-52. Residue Tyr-110 participates in substrate binding.

It belongs to the tRNA pseudouridine synthase TruA family. As to quaternary structure, homodimer.

It catalyses the reaction uridine(38/39/40) in tRNA = pseudouridine(38/39/40) in tRNA. Functionally, formation of pseudouridine at positions 38, 39 and 40 in the anticodon stem and loop of transfer RNAs. This is tRNA pseudouridine synthase A from Paraburkholderia xenovorans (strain LB400).